A 365-amino-acid chain; its full sequence is DNA replication and repair protein RecF (365 aa).

Residue 30 to 37 coordinates ATP; that stretch reads GNNGMGKT.

Belongs to the RecF family.

It localises to the cytoplasm. The RecF protein is involved in DNA metabolism; it is required for DNA replication and normal SOS inducibility. RecF binds preferentially to single-stranded, linear DNA. It also seems to bind ATP. The protein is DNA replication and repair protein RecF of Parabacteroides distasonis (strain ATCC 8503 / DSM 20701 / CIP 104284 / JCM 5825 / NCTC 11152).